The following is an 811-amino-acid chain: Receptor-like protein 46 (811 aa).

The signal sequence occupies residues 1–21; it reads MSKQCLLSCFLFFCFFIPQLS. Residues 22-782 lie on the Extracellular side of the membrane; sequence FSCPQDQRQS…EEEDKEEEET (761 aa). Residues Asn-46, Asn-71, Asn-128, and Asn-143 are each glycosylated (N-linked (GlcNAc...) asparagine). LRR repeat units follow at residues 104–128, 129–153, 155–177, 178–201, 203–225, 226–249, 251–273, 275–298, 299–322, 324–348, 349–369, 370–395, 397–419, 421–442, 443–466, 468–488, 490–510, 511–534, 536–560, 561–583, 643–665, 666–688, 690–713, and 714–738; these read INSL…AFVN, LTSL…LFSL, NLQR…IKEL, KNLQ…IGSL, ELLT…VSRL, TKLK…IGNL, NLST…IHNL, NLET…WLFG, LQKL…GYVF, QFKL…LKNQ, TALV…PKWL, ADLK…LFQR, SLYY…IGES, VMVL…ITKI, PFLK…RPES, LEWL…YFGG, TSML…NFRN, LSYL…LISQ, SSSV…ISNL, TSLK…SLGN, LYTL…LGNL, KSLK…SFGD, EKVE…LSKL, and SELN…QLDR. The N-linked (GlcNAc...) asparagine glycan is linked to Asn-215. Asn-251 is a glycosylation site (N-linked (GlcNAc...) asparagine). An N-linked (GlcNAc...) asparagine glycan is attached at Asn-347. 3 N-linked (GlcNAc...) asparagine glycosylation sites follow: Asn-376, Asn-407, and Asn-430. Residues Asn-499 and Asn-510 are each glycosylated (N-linked (GlcNAc...) asparagine). 3 N-linked (GlcNAc...) asparagine glycosylation sites follow: Asn-546, Asn-559, and Asn-583. Asn-672 and Asn-701 each carry an N-linked (GlcNAc...) asparagine glycan. Asn-747 carries N-linked (GlcNAc...) asparagine glycosylation. Residues 783–803 form a helical membrane-spanning segment; that stretch reads IFSWNAAAIGCSCGFLIAVVF. Topologically, residues 804–811 are cytoplasmic; sequence MSYNELWK.

It belongs to the RLP family.

The protein resides in the cell membrane. This is Receptor-like protein 46 from Arabidopsis thaliana (Mouse-ear cress).